The sequence spans 380 residues: MAAAAAAPGGGGGEPRGTAGVVPVVPGEVEVVKGQPFDVGPRYTQLQYIGEGAYGMVSSAYDHVRKTRVAIKKISPFEHQTYCQRTLREIQILLRFRHENVIGIRDILRAPTLEAMRDVYIVQDLMETDLYKLLKSQQLSNDHICYFLYQILRGLKYIHSANVLHRDLKPSNLLINTTCDLKICDFGLARIADPEHDHTGFLTEYVATRWYRAPEIMLNSKGYTKSIDIWSVGCILAEMLSNRPIFPGKHYLDQLNHILGILGSPSQEDLNCIINMKARNYLQSLPSKTKVAWAKLFPKSDSKALDLLDRMLTFNPNKRITVEEALAHPYLEQYYDPTDEPVAEEPFTFDMELDDLPKERLKELIFQETARFQPGAPEAP.

A2 is subject to N-acetylalanine. Residues 43–331 (YTQLQYIGEG…VEEALAHPYL (289 aa)) form the Protein kinase domain. ATP-binding positions include 49-57 (IGEGAYGMV) and K72. Residue D167 is the Proton acceptor of the active site. A Phosphothreonine modification is found at T199. The residue at position 203 (T203) is a Phosphothreonine; by MAP2K1 and MAP2K2. The short motif at 203–205 (TEY) is the TXY element. Y205 bears the Phosphotyrosine; by MAP2K1 and MAP2K2 mark. A Phosphothreonine; by autocatalysis modification is found at T208.

The protein belongs to the protein kinase superfamily. CMGC Ser/Thr protein kinase family. MAP kinase subfamily. Binds both upstream activators and downstream substrates in multimolecular complexes. Found in a complex with at least BRAF, HRAS, MAP2K1/MEK1, MAPK3 and RGS14. Interacts with ADAM15, ARRB2, CANX, DAPK1 (via death domain), HSF4, IER3, MAP2K1/MEK1, MORG1, NISCH, PEA15, SGK1 and MKNK2. MKNK2 isoform 1 binding prevents from dephosphorylation and inactivation. Interacts with TPR. Interacts with HSF1 (via D domain and preferentially with hyperphosphorylated form); this interaction occurs upon heat shock. Interacts with CDKN2AIP. Interacts with CAVIN4. Interacts with GIT1; this interaction is necessary for MAPK3 localization to focal adhesions. Interacts with ZNF263. Interacts with EBF4. It depends on Mg(2+) as a cofactor. Post-translationally, phosphorylated upon FLT3 and KIT signaling. Ligand-activated ALK induces tyrosine phosphorylation. Dephosphorylated by PTPRJ at Tyr-205. Dually phosphorylated on Thr-203 and Tyr-205, which activates the enzyme. Ubiquitinated by TRIM15 via 'Lys-63'-linked ubiquitination; leading to activation. Deubiquitinated by CYLD. Highest levels within the nervous system, expressed in different tissues, mostly in intestine, placenta and lung.

The protein resides in the cytoplasm. Its subcellular location is the nucleus. It is found in the membrane. It localises to the caveola. The protein localises to the cell junction. The protein resides in the focal adhesion. The enzyme catalyses L-seryl-[protein] + ATP = O-phospho-L-seryl-[protein] + ADP + H(+). The catalysed reaction is L-threonyl-[protein] + ATP = O-phospho-L-threonyl-[protein] + ADP + H(+). With respect to regulation, phosphorylated by MAP2K1/MEK1 and MAP2K2/MEK2 on Thr-203 and Tyr-205 in response to external stimuli like insulin or NGF. Both phosphorylations are required for activity. This phosphorylation causes dramatic conformational changes, which enable full activation and interaction of MAPK1/ERK2 with its substrates. Dephosphorylated and inactivated by DUSP3, DUSP6 and DUSP9. Serine/threonine kinase which acts as an essential component of the MAP kinase signal transduction pathway. MAPK1/ERK2 and MAPK3/ERK1 are the 2 MAPKs which play an important role in the MAPK/ERK cascade. They participate also in a signaling cascade initiated by activated KIT and KITLG/SCF. Depending on the cellular context, the MAPK/ERK cascade mediates diverse biological functions such as cell growth, adhesion, survival and differentiation through the regulation of transcription, translation, cytoskeletal rearrangements. The MAPK/ERK cascade also plays a role in initiation and regulation of meiosis, mitosis, and postmitotic functions in differentiated cells by phosphorylating a number of transcription factors. About 160 substrates have already been discovered for ERKs. Many of these substrates are localized in the nucleus, and seem to participate in the regulation of transcription upon stimulation. However, other substrates are found in the cytosol as well as in other cellular organelles, and those are responsible for processes such as translation, mitosis and apoptosis. Moreover, the MAPK/ERK cascade is also involved in the regulation of the endosomal dynamics, including lysosome processing and endosome cycling through the perinuclear recycling compartment (PNRC); as well as in the fragmentation of the Golgi apparatus during mitosis. The substrates include transcription factors (such as ATF2, BCL6, ELK1, ERF, FOS, HSF4 or SPZ1), cytoskeletal elements (such as CANX, CTTN, GJA1, MAP2, MAPT, PXN, SORBS3 or STMN1), regulators of apoptosis (such as BAD, BTG2, CASP9, DAPK1, IER3, MCL1 or PPARG), regulators of translation (such as EIF4EBP1) and a variety of other signaling-related molecules (like ARHGEF2, DEPTOR, FRS2 or GRB10). Protein kinases (such as RAF1, RPS6KA1/RSK1, RPS6KA3/RSK2, RPS6KA2/RSK3, RPS6KA6/RSK4, SYK, MKNK1/MNK1, MKNK2/MNK2, RPS6KA5/MSK1, RPS6KA4/MSK2, MAPKAPK3 or MAPKAPK5) and phosphatases (such as DUSP1, DUSP4, DUSP6 or DUSP16) are other substrates which enable the propagation the MAPK/ERK signal to additional cytosolic and nuclear targets, thereby extending the specificity of the cascade. The sequence is that of Mitogen-activated protein kinase 3 (Mapk3) from Rattus norvegicus (Rat).